The primary structure comprises 440 residues: NK1 transcription factor-related protein 1 (440 aa).

Residues 1 to 13 (MSTSGPAAPGDVP) show a composition bias toward low complexity. Disordered regions lie at residues 1-82 (MSTS…RPTS), 145-291 (GVAA…PRRA), and 342-387 (KWKK…PMGA). Residues 14–31 (ALPPPPPGPGSGPAPPAP) show a composition bias toward pro residues. Composition is skewed to low complexity over residues 62 to 74 (VPAV…AARP) and 145 to 158 (GVAA…TSAG). The segment covering 170–181 (GYSSGSGRSPTA) has biased composition (polar residues). Positions 182–198 (DSEDEAPEDEDEEEAPE) are enriched in acidic residues. Gly residues predominate over residues 210 to 222 (GGSGGLGARGSGC). Low complexity predominate over residues 237-269 (AAPGPRGNSPGAPGPPATATGAGSAGSTPQGAA). Positions 288-347 (PRRARTAFTYEQLVALENKFKATRYLSVCERLNLALSLSLTETQVKIWFQNRRTKWKKQN) form a DNA-binding region, homeobox. Positions 356 to 374 (TGGGGGPGPGAGPGAGLPG) are enriched in gly residues.

Belongs to the NK-1 homeobox family.

The protein resides in the nucleus. Its function is as follows. May be required for the coordinated crosstalk of factors involved in the maintenance of energy homeostasis, possibly by regulating the transcription of specific factors involved in energy balance. The sequence is that of NK1 transcription factor-related protein 1 from Mus musculus (Mouse).